The following is a 367-amino-acid chain: Flagellar P-ring protein (367 aa).

Positions 1–18 (MFRALITALFCFSGLALA) are cleaved as a signal peptide.

It belongs to the FlgI family. As to quaternary structure, the basal body constitutes a major portion of the flagellar organelle and consists of four rings (L,P,S, and M) mounted on a central rod.

The protein localises to the periplasm. It localises to the bacterial flagellum basal body. In terms of biological role, assembles around the rod to form the L-ring and probably protects the motor/basal body from shearing forces during rotation. This Rhizorhabdus wittichii (strain DSM 6014 / CCUG 31198 / JCM 15750 / NBRC 105917 / EY 4224 / RW1) (Sphingomonas wittichii) protein is Flagellar P-ring protein.